The chain runs to 503 residues: Cytochrome P450 monooxygenase ecdH (503 aa).

The chain crosses the membrane as a helical span at residues 8-24 (TTLLCGVISSTLLLLLL). N-linked (GlcNAc...) asparagine glycans are attached at residues Asn-64, Asn-324, and Asn-413. Cys-449 lines the heme pocket.

This sequence belongs to the cytochrome P450 family. Heme serves as cofactor.

The protein resides in the membrane. It functions in the pathway antifungal biosynthesis. Cytochrome P450 monooxygenase; part of the gene cluster that mediates the biosynthesis of echinocandin B, a fungal lipidated cyclic hexapeptide that acts as an antifungal agent. Linoleoyl-AMP, produced by the fatty-acyl-AMP ligase ecdI, is transferred to the initiation carrier domain (T0) of ecdA. The linoleoyl-S-phosphopantetheinyl-T0 is sequentially extended with L-ornithine, L-threonine, L-proline, L-homotyrosine, L-threonine, and 4R-methyl-L-proline to form the linear hexapeptide. Thereafter, the terminal condensation (C7) performs macrocyclization of the NRPS product and the cyclic scaffold is released from ecdA. All six of the amino acid residues are hydroxylated, including 4R,5R-dihydroxy-L-ornithine, 4R-hydroxyl-L-proline, 3S,4S-dihydroxy-L-homotyrosine, and 3S-hydroxyl-4S-methyl-L-prolin. In the pathway, all the hydroxylation reactions are proposed to occur following completion of the cyclic peptide, so the unhydroxylated precursor produced by ecdA will undergo six rounds of hydroxylation. Five hydroxylase genes (ecdG, ecdH, ecdK, htyE and htyF) are embedded within the echinocandin B (ecd) and L-homotyrosine (hty) clusters. The chain is Cytochrome P450 monooxygenase ecdH from Aspergillus rugulosus (Emericella rugulosa).